The sequence spans 480 residues: Cytochrome c oxidase subunit 1 (480 aa).

The chain crosses the membrane as a helical span at residues 22–42 (ISYLWLAYWFGMIGFYMSVLI). Residues Glu45 and Gly50 each contribute to the Ca(2+) site. 8 consecutive transmembrane segments (helical) span residues 64-84 (LLFT…GLFG), 109-129 (SLLL…LEIG), 151-171 (LIIF…INFI), 194-214 (IVLT…VFLM), 240-260 (LFWF…FGII), 278-298 (MILA…HHMY), 309-329 (YFTT…FNWV), and 343-363 (LILF…TGVV). Position 69 (His69) interacts with Fe(II)-heme a. Cu cation is bound at residue His246. Positions 246–250 (HPEVY) form a cross-link, 1'-histidyl-3'-tyrosine (His-Tyr). Residue Tyr250 coordinates O2. Cu cation contacts are provided by His295 and His296. Mg(2+) is bound by residues His374 and Asp375. Residue His382 participates in heme a3 binding. A run of 2 helical transmembrane segments spans residues 382-402 (HFHF…IVYI) and 416-436 (LSLM…PMHF). Residue His384 coordinates Fe(II)-heme a. Residue Pro447 coordinates Ca(2+). A helical transmembrane segment spans residues 458–478 (FICTLGATMMLVLKLTVLFII).

It belongs to the heme-copper respiratory oxidase family. Component of the cytochrome c oxidase (complex IV, CIV), a multisubunit enzyme composed of a catalytic core of 3 subunits and several supernumerary subunits. The complex exists as a monomer or a dimer and forms supercomplexes (SCs) in the inner mitochondrial membrane with ubiquinol-cytochrome c oxidoreductase (cytochrome b-c1 complex, complex III, CIII). Heme is required as a cofactor. Requires Cu cation as cofactor.

Its subcellular location is the mitochondrion inner membrane. It carries out the reaction 4 Fe(II)-[cytochrome c] + O2 + 8 H(+)(in) = 4 Fe(III)-[cytochrome c] + 2 H2O + 4 H(+)(out). It participates in energy metabolism; oxidative phosphorylation. Its function is as follows. Component of the cytochrome c oxidase, the last enzyme in the mitochondrial electron transport chain which drives oxidative phosphorylation. The respiratory chain contains 3 multisubunit complexes succinate dehydrogenase (complex II, CII), ubiquinol-cytochrome c oxidoreductase (cytochrome b-c1 complex, complex III, CIII) and cytochrome c oxidase (complex IV, CIV), that cooperate to transfer electrons derived from NADH and succinate to molecular oxygen, creating an electrochemical gradient over the inner membrane that drives transmembrane transport and the ATP synthase. Cytochrome c oxidase is the component of the respiratory chain that catalyzes the reduction of oxygen to water. Electrons originating from reduced cytochrome c in the intermembrane space (IMS) are transferred via the dinuclear copper A center (CU(A)) of subunit 2 and heme A of subunit 1 to the active site in subunit 1, a binuclear center (BNC) formed by heme A3 and copper B (CU(B)). The BNC reduces molecular oxygen to 2 water molecules using 4 electrons from cytochrome c in the IMS and 4 protons from the mitochondrial matrix. This Theileria annulata protein is Cytochrome c oxidase subunit 1 (MT-CO1).